The primary structure comprises 761 residues: 1,4-alpha-glucan branching enzyme GlgB (761 aa).

D431 serves as the catalytic Nucleophile. The active-site Proton donor is the E484.

The protein belongs to the glycosyl hydrolase 13 family. GlgB subfamily. Monomer.

The catalysed reaction is Transfers a segment of a (1-&gt;4)-alpha-D-glucan chain to a primary hydroxy group in a similar glucan chain.. Its pathway is glycan biosynthesis; glycogen biosynthesis. Functionally, catalyzes the formation of the alpha-1,6-glucosidic linkages in glycogen by scission of a 1,4-alpha-linked oligosaccharide from growing alpha-1,4-glucan chains and the subsequent attachment of the oligosaccharide to the alpha-1,6 position. In Synechococcus sp. (strain WH7803), this protein is 1,4-alpha-glucan branching enzyme GlgB.